The following is a 127-amino-acid chain: Large ribosomal subunit protein bL20 (127 aa).

The protein belongs to the bacterial ribosomal protein bL20 family.

In terms of biological role, binds directly to 23S ribosomal RNA and is necessary for the in vitro assembly process of the 50S ribosomal subunit. It is not involved in the protein synthesizing functions of that subunit. This Corynebacterium jeikeium (strain K411) protein is Large ribosomal subunit protein bL20.